Reading from the N-terminus, the 208-residue chain is ATP-dependent Clp protease proteolytic subunit (208 aa).

Residue serine 106 is the Nucleophile of the active site. The active site involves histidine 131.

The protein belongs to the peptidase S14 family. Fourteen ClpP subunits assemble into 2 heptameric rings which stack back to back to give a disk-like structure with a central cavity, resembling the structure of eukaryotic proteasomes.

Its subcellular location is the cytoplasm. It carries out the reaction Hydrolysis of proteins to small peptides in the presence of ATP and magnesium. alpha-casein is the usual test substrate. In the absence of ATP, only oligopeptides shorter than five residues are hydrolyzed (such as succinyl-Leu-Tyr-|-NHMec, and Leu-Tyr-Leu-|-Tyr-Trp, in which cleavage of the -Tyr-|-Leu- and -Tyr-|-Trp bonds also occurs).. Cleaves peptides in various proteins in a process that requires ATP hydrolysis. Has a chymotrypsin-like activity. Plays a major role in the degradation of misfolded proteins. The protein is ATP-dependent Clp protease proteolytic subunit of Caulobacter sp. (strain K31).